We begin with the raw amino-acid sequence, 362 residues long: Phosphoserine aminotransferase (362 aa).

The L-glutamate site is built by S9 and R42. Pyridoxal 5'-phosphate is bound by residues 76–77 (GR), W102, T153, D174, and Q197. K198 is modified (N6-(pyridoxal phosphate)lysine). 239-240 (NT) provides a ligand contact to pyridoxal 5'-phosphate.

Belongs to the class-V pyridoxal-phosphate-dependent aminotransferase family. SerC subfamily. Homodimer. It depends on pyridoxal 5'-phosphate as a cofactor.

The protein localises to the cytoplasm. It carries out the reaction O-phospho-L-serine + 2-oxoglutarate = 3-phosphooxypyruvate + L-glutamate. The enzyme catalyses 4-(phosphooxy)-L-threonine + 2-oxoglutarate = (R)-3-hydroxy-2-oxo-4-phosphooxybutanoate + L-glutamate. Its pathway is amino-acid biosynthesis; L-serine biosynthesis; L-serine from 3-phospho-D-glycerate: step 2/3. It functions in the pathway cofactor biosynthesis; pyridoxine 5'-phosphate biosynthesis; pyridoxine 5'-phosphate from D-erythrose 4-phosphate: step 3/5. Its function is as follows. Catalyzes the reversible conversion of 3-phosphohydroxypyruvate to phosphoserine and of 3-hydroxy-2-oxo-4-phosphonooxybutanoate to phosphohydroxythreonine. This chain is Phosphoserine aminotransferase, found in Enterobacter sp. (strain 638).